The chain runs to 372 residues: Carbamoyl phosphate synthase small chain (372 aa).

The CPSase stretch occupies residues methionine 1–isoleucine 186. L-glutamine-binding residues include serine 52, glycine 233, and glycine 235. The Glutamine amidotransferase type-1 domain occupies isoleucine 185–asparagine 372. Residue cysteine 261 is the Nucleophile of the active site. Residues leucine 262, glutamine 265, asparagine 303, glycine 305, and tyrosine 306 each contribute to the L-glutamine site. Catalysis depends on residues histidine 345 and glutamate 347.

This sequence belongs to the CarA family. In terms of assembly, composed of two chains; the small (or glutamine) chain promotes the hydrolysis of glutamine to ammonia, which is used by the large (or ammonia) chain to synthesize carbamoyl phosphate. Tetramer of heterodimers (alpha,beta)4.

It carries out the reaction hydrogencarbonate + L-glutamine + 2 ATP + H2O = carbamoyl phosphate + L-glutamate + 2 ADP + phosphate + 2 H(+). It catalyses the reaction L-glutamine + H2O = L-glutamate + NH4(+). Its pathway is amino-acid biosynthesis; L-arginine biosynthesis; carbamoyl phosphate from bicarbonate: step 1/1. It functions in the pathway pyrimidine metabolism; UMP biosynthesis via de novo pathway; (S)-dihydroorotate from bicarbonate: step 1/3. Small subunit of the glutamine-dependent carbamoyl phosphate synthetase (CPSase). CPSase catalyzes the formation of carbamoyl phosphate from the ammonia moiety of glutamine, carbonate, and phosphate donated by ATP, constituting the first step of 2 biosynthetic pathways, one leading to arginine and/or urea and the other to pyrimidine nucleotides. The small subunit (glutamine amidotransferase) binds and cleaves glutamine to supply the large subunit with the substrate ammonia. This chain is Carbamoyl phosphate synthase small chain, found in Metallosphaera sedula (strain ATCC 51363 / DSM 5348 / JCM 9185 / NBRC 15509 / TH2).